The chain runs to 456 residues: Adenylosuccinate lyase (456 aa).

Residues 15 to 16 (RY), 90 to 92 (NHD), and 122 to 123 (TS) each bind N(6)-(1,2-dicarboxyethyl)-AMP. H171 serves as the catalytic Proton donor/acceptor. Q247 serves as a coordination point for N(6)-(1,2-dicarboxyethyl)-AMP. The active-site Proton donor/acceptor is S295. Residues S296, 301 to 303 (KVN), N309, R335, and 340 to 344 (STVLR) each bind N(6)-(1,2-dicarboxyethyl)-AMP.

It belongs to the lyase 1 family. Adenylosuccinate lyase subfamily. Homotetramer. Residues from neighboring subunits contribute catalytic and substrate-binding residues to each active site.

It carries out the reaction N(6)-(1,2-dicarboxyethyl)-AMP = fumarate + AMP. The enzyme catalyses (2S)-2-[5-amino-1-(5-phospho-beta-D-ribosyl)imidazole-4-carboxamido]succinate = 5-amino-1-(5-phospho-beta-D-ribosyl)imidazole-4-carboxamide + fumarate. Its pathway is purine metabolism; AMP biosynthesis via de novo pathway; AMP from IMP: step 2/2. The protein operates within purine metabolism; IMP biosynthesis via de novo pathway; 5-amino-1-(5-phospho-D-ribosyl)imidazole-4-carboxamide from 5-amino-1-(5-phospho-D-ribosyl)imidazole-4-carboxylate: step 2/2. In terms of biological role, catalyzes two reactions in de novo purine nucleotide biosynthesis. Catalyzes the breakdown of 5-aminoimidazole- (N-succinylocarboxamide) ribotide (SAICAR or 2-[5-amino-1-(5-phospho-beta-D-ribosyl)imidazole-4-carboxamido]succinate) to 5-aminoimidazole-4-carboxamide ribotide (AICAR or 5-amino-1-(5-phospho-beta-D-ribosyl)imidazole-4-carboxamide) and fumarate, and of adenylosuccinate (ADS or N(6)-(1,2-dicarboxyethyl)-AMP) to adenosine monophosphate (AMP) and fumarate. This chain is Adenylosuccinate lyase (purB), found in Legionella pneumophila (strain Corby).